Consider the following 104-residue polypeptide: Large ribosomal subunit protein uL24 (104 aa).

The protein belongs to the universal ribosomal protein uL24 family. Part of the 50S ribosomal subunit.

One of two assembly initiator proteins, it binds directly to the 5'-end of the 23S rRNA, where it nucleates assembly of the 50S subunit. Its function is as follows. One of the proteins that surrounds the polypeptide exit tunnel on the outside of the subunit. This chain is Large ribosomal subunit protein uL24, found in Anaplasma phagocytophilum (strain HZ).